The sequence spans 726 residues: Catalase-peroxidase (726 aa).

A disordered region spans residues 1–33 (MSTSDDIHNTTATGKCPFHQGGHDQSAGAGTTT). The segment at residues 105-226 (WHGAGTYRSI…LGATEMGLIY (122 aa)) is a cross-link (tryptophyl-tyrosyl-methioninium (Trp-Tyr) (with M-252)). His-106 (proton acceptor) is an active-site residue. Positions 226–252 (YVNPEGPDHSGEPLSAAAAIRATFGNM) form a cross-link, tryptophyl-tyrosyl-methioninium (Tyr-Met) (with W-105). His-267 lines the heme b pocket.

It belongs to the peroxidase family. Peroxidase/catalase subfamily. Homodimer or homotetramer. Heme b is required as a cofactor. Formation of the three residue Trp-Tyr-Met cross-link is important for the catalase, but not the peroxidase activity of the enzyme.

The enzyme catalyses H2O2 + AH2 = A + 2 H2O. The catalysed reaction is 2 H2O2 = O2 + 2 H2O. Its function is as follows. Bifunctional enzyme with both catalase and broad-spectrum peroxidase activity. The polypeptide is Catalase-peroxidase (Shigella boydii serotype 18 (strain CDC 3083-94 / BS512)).